Consider the following 361-residue polypeptide: 3-dehydroquinate synthase (361 aa).

Belongs to the archaeal-type DHQ synthase family.

It catalyses the reaction 2-amino-2,3,7-trideoxy-D-lyxo-hept-6-ulosonate + NAD(+) + H2O = 3-dehydroquinate + NH4(+) + NADH + H(+). In terms of biological role, catalyzes the oxidative deamination and cyclization of 2-amino-3,7-dideoxy-D-threo-hept-6-ulosonic acid (ADH) to yield 3-dehydroquinate (DHQ), which is fed into the canonical shikimic pathway of aromatic amino acid biosynthesis. This chain is 3-dehydroquinate synthase, found in Methanococcus maripaludis (strain C6 / ATCC BAA-1332).